The chain runs to 200 residues: Holliday junction branch migration complex subunit RuvA (200 aa).

The domain I stretch occupies residues 1–63 (MYAYVKGKLT…EDAQLLYGFS (63 aa)). The segment at 64–142 (SEEEKDMFLS…ITEEDSDSLL (79 aa)) is domain II. Positions 143-149 (QVDATST) are flexible linker. Residues 150–200 (VQDQFVQEAMLALEALGYSKRELAKVEKTLNKNKYDSVDEAVKAGLQLVVS) are domain III.

It belongs to the RuvA family. In terms of assembly, homotetramer. Forms an RuvA(8)-RuvB(12)-Holliday junction (HJ) complex. HJ DNA is sandwiched between 2 RuvA tetramers; dsDNA enters through RuvA and exits via RuvB. An RuvB hexamer assembles on each DNA strand where it exits the tetramer. Each RuvB hexamer is contacted by two RuvA subunits (via domain III) on 2 adjacent RuvB subunits; this complex drives branch migration. In the full resolvosome a probable DNA-RuvA(4)-RuvB(12)-RuvC(2) complex forms which resolves the HJ.

The protein localises to the cytoplasm. Functionally, the RuvA-RuvB-RuvC complex processes Holliday junction (HJ) DNA during genetic recombination and DNA repair, while the RuvA-RuvB complex plays an important role in the rescue of blocked DNA replication forks via replication fork reversal (RFR). RuvA specifically binds to HJ cruciform DNA, conferring on it an open structure. The RuvB hexamer acts as an ATP-dependent pump, pulling dsDNA into and through the RuvAB complex. HJ branch migration allows RuvC to scan DNA until it finds its consensus sequence, where it cleaves and resolves the cruciform DNA. This is Holliday junction branch migration complex subunit RuvA from Staphylococcus aureus (strain USA300).